Here is a 1088-residue protein sequence, read N- to C-terminus: Serine/threonine-protein kinase 11-interacting protein (1088 aa).

LRR repeat units lie at residues 109–130 (SLRH…RGIY), 132–152 (QLET…LSAC), 164–185 (ALLS…LRLL), 187–209 (ALRF…MDLC), 210–231 (ELHH…GPSG), 233–254 (ALGV…EQLR), 255–276 (NLRH…SPLW), and 280–301 (ELRK…RAAT). Disordered regions lie at residues 335 to 407 (GLSP…SPAG) and 437 to 533 (LEPS…QKEV). Over residues 346–367 (PVGSTPETSGGPDLSDSLSSGG) the composition is skewed to low complexity. Residues 375–385 (HKVKSRVRVRR) are compositionally biased toward basic residues. Phosphoserine occurs at positions 387, 389, and 392. Over residues 447–460 (TPTTSAPSAPPASS) the composition is skewed to low complexity. Phosphoserine is present on Ser-470. The segment covering 508–529 (EEGEMVEQGEEEAGEEEEEEQD) has biased composition (acidic residues). Ser-599 is modified (phosphoserine). Disordered regions lie at residues 724–780 (TPNR…SPPP) and 978–1009 (DAAG…PAVR). The segment covering 733–742 (EQSLAPSPSA) has biased composition (polar residues). Positions 750–759 (GHGDHLDRAK) are enriched in basic and acidic residues. Phosphoserine occurs at positions 761, 773, and 777. The span at 978–994 (DAAGSPAEPSPPAASGE) shows a compositional bias: low complexity.

This sequence belongs to the STK11IP family. In terms of assembly, found in a ternary complex composed of STK11/LKB1, STK11IP and SMAD4. Interacts with STK11/LKB1 and SMAD4.

It is found in the cytoplasm. In terms of biological role, may regulate STK11/LKB1 function by controlling its subcellular localization. The chain is Serine/threonine-protein kinase 11-interacting protein (STK11IP) from Homo sapiens (Human).